We begin with the raw amino-acid sequence, 228 residues long: Ion-translocating oxidoreductase complex subunit G (228 aa).

A helical transmembrane segment spans residues 35–55; sequence ALSLGLVCALVAVALLLGNQL. Threonine 197 is subject to FMN phosphoryl threonine.

This sequence belongs to the RnfG family. In terms of assembly, the complex is composed of six subunits: RnfA, RnfB, RnfC, RnfD, RnfE and RnfG. FMN is required as a cofactor.

The protein resides in the cell inner membrane. Functionally, part of a membrane-bound complex that couples electron transfer with translocation of ions across the membrane. The protein is Ion-translocating oxidoreductase complex subunit G of Stutzerimonas stutzeri (Pseudomonas stutzeri).